Consider the following 78-residue polypeptide: UPF0349 protein YuzB (78 aa).

This sequence belongs to the UPF0349 family.

The protein is UPF0349 protein YuzB (yuzB) of Bacillus subtilis (strain 168).